We begin with the raw amino-acid sequence, 252 residues long: U2 small nuclear ribonucleoprotein A' (252 aa).

3 LRR repeats span residues 41 to 62 (PHDAIDFTDNDIQVLGNFPLSP), 63 to 84 (RIRTLLLARNRIAQIQSTLPNA), and 87 to 108 (NLKNLVLASNNIGELADLEVLG). Positions 121–159 (NPVTKKENYRYWVLWLCPQVRFLDYVKVKDAERQKAKEL) constitute an LRRCT domain.

Belongs to the U2 small nuclear ribonucleoprotein A family. Associated with the spliceosome.

It is found in the nucleus. In terms of biological role, involved in pre-mRNA splicing. The polypeptide is U2 small nuclear ribonucleoprotein A' (lea-1) (Neurospora crassa (strain ATCC 24698 / 74-OR23-1A / CBS 708.71 / DSM 1257 / FGSC 987)).